The chain runs to 552 residues: Dihydroxy-acid dehydratase (552 aa).

Position 78 (D78) interacts with Mg(2+). C119 serves as a coordination point for [2Fe-2S] cluster. Positions 120 and 121 each coordinate Mg(2+). Position 121 is an N6-carboxylysine (K121). C191 serves as a coordination point for [2Fe-2S] cluster. E442 is a Mg(2+) binding site. The Proton acceptor role is filled by S468.

This sequence belongs to the IlvD/Edd family. In terms of assembly, homodimer. The cofactor is [2Fe-2S] cluster. Requires Mg(2+) as cofactor.

The catalysed reaction is (2R)-2,3-dihydroxy-3-methylbutanoate = 3-methyl-2-oxobutanoate + H2O. It carries out the reaction (2R,3R)-2,3-dihydroxy-3-methylpentanoate = (S)-3-methyl-2-oxopentanoate + H2O. It functions in the pathway amino-acid biosynthesis; L-isoleucine biosynthesis; L-isoleucine from 2-oxobutanoate: step 3/4. It participates in amino-acid biosynthesis; L-valine biosynthesis; L-valine from pyruvate: step 3/4. Functions in the biosynthesis of branched-chain amino acids. Catalyzes the dehydration of (2R,3R)-2,3-dihydroxy-3-methylpentanoate (2,3-dihydroxy-3-methylvalerate) into 2-oxo-3-methylpentanoate (2-oxo-3-methylvalerate) and of (2R)-2,3-dihydroxy-3-methylbutanoate (2,3-dihydroxyisovalerate) into 2-oxo-3-methylbutanoate (2-oxoisovalerate), the penultimate precursor to L-isoleucine and L-valine, respectively. This chain is Dihydroxy-acid dehydratase, found in Ruminiclostridium cellulolyticum (strain ATCC 35319 / DSM 5812 / JCM 6584 / H10) (Clostridium cellulolyticum).